Reading from the N-terminus, the 293-residue chain is Decaprenyl diphosphate synthase (293 aa).

The disordered stretch occupies residues 1-24 (MATTRGKKTYPQLPPAPDDYPTFP). The active site involves Asp73. Asp73 provides a ligand contact to Mg(2+). Residues 74-77 (GNGR), Trp78, Arg86, His90, and 118-120 (STE) contribute to the substrate site. Asn121 acts as the Proton acceptor in catalysis. Substrate is bound by residues Trp122, Arg124, Arg241, and 247–249 (RAS). Glu260 contributes to the Mg(2+) binding site.

It belongs to the UPP synthase family. In terms of assembly, homodimer. Mg(2+) serves as cofactor.

The protein resides in the cell membrane. It carries out the reaction (2Z,6E)-farnesyl diphosphate + 7 isopentenyl diphosphate = (2Z,6Z,10Z,14Z,18Z,22Z,26Z,30Z,34E)-decaprenyl diphosphate + 7 diphosphate. The enzyme catalyses n isopentenyl diphosphate + (2E,6E)-farnesyl diphosphate = a di-trans,poly-cis-polyprenyl diphosphate + n diphosphate. Functionally, catalyzes the sequential condensation of isopentenyl diphosphate (IPP) in the cis configuration with (2Z,6E)-farnesyl diphosphate (Z-FPP or EZ-FPP) generating the 50 carbon product trans,polycis-decaprenyl diphosphate. When (2E,6E)-farnesyl diphosphate (E-FPP or EE-FPP) is used in vitro, both primary products decaprenyl diphosphate and heptaprenyl diphosphate are synthesized. It is probably due to the fact that M.smegmatis synthesizes both (2E,6E,10E)-geranylgeranyl diphosphate (EEE-GGPP) and (2E,6E,10Z)-geranylgeranyl diphosphate (EEZ-GGPP). Can also accept many different allylic substrates, including E-geranyl diphosphate (E-GPP), neryl diphosphate (NPP), and all-trans-geranyl-geranyl diphosphate. This Mycolicibacterium smegmatis (strain ATCC 700084 / mc(2)155) (Mycobacterium smegmatis) protein is Decaprenyl diphosphate synthase (uppS).